Reading from the N-terminus, the 503-residue chain is GMP synthase [glutamine-hydrolyzing] (503 aa).

One can recognise a Glutamine amidotransferase type-1 domain in the interval 1–189 (MVLVLDFGSQ…FLELAGAKRD (189 aa)). Cys78 serves as the catalytic Nucleophile. Residues His164 and Glu166 contribute to the active site. The GMPS ATP-PPase domain maps to 190–378 (WTPEHVLEEL…LGLPDTLRLR (189 aa)). ATP is bound at residue 217–223 (SGGVDSS).

Homodimer.

The catalysed reaction is XMP + L-glutamine + ATP + H2O = GMP + L-glutamate + AMP + diphosphate + 2 H(+). Its pathway is purine metabolism; GMP biosynthesis; GMP from XMP (L-Gln route): step 1/1. Catalyzes the synthesis of GMP from XMP. The chain is GMP synthase [glutamine-hydrolyzing] from Thermus thermophilus (strain ATCC BAA-163 / DSM 7039 / HB27).